We begin with the raw amino-acid sequence, 333 residues long: Holliday junction branch migration complex subunit RuvB (333 aa).

The interval 1–182 is large ATPase domain (RuvB-L); that stretch reads MEERIVSAEA…FGVMARLEYY (182 aa). ATP is bound by residues leucine 21, arginine 22, glycine 63, lysine 66, threonine 67, threonine 68, 129–131, arginine 172, tyrosine 182, and arginine 219; that span reads EDF. Threonine 67 contributes to the Mg(2+) binding site. The interval 183-253 is small ATPAse domain (RuvB-S); sequence KPEELAQIVE…RACSALEQLH (71 aa). Residues 256 to 333 form a head domain (RuvB-H) region; the sequence is PLGLDHIDDK…AHYGVEKQNG (78 aa). Residues arginine 311 and arginine 316 each coordinate DNA.

Belongs to the RuvB family. As to quaternary structure, homohexamer. Forms an RuvA(8)-RuvB(12)-Holliday junction (HJ) complex. HJ DNA is sandwiched between 2 RuvA tetramers; dsDNA enters through RuvA and exits via RuvB. An RuvB hexamer assembles on each DNA strand where it exits the tetramer. Each RuvB hexamer is contacted by two RuvA subunits (via domain III) on 2 adjacent RuvB subunits; this complex drives branch migration. In the full resolvosome a probable DNA-RuvA(4)-RuvB(12)-RuvC(2) complex forms which resolves the HJ.

The protein resides in the cytoplasm. The catalysed reaction is ATP + H2O = ADP + phosphate + H(+). The RuvA-RuvB-RuvC complex processes Holliday junction (HJ) DNA during genetic recombination and DNA repair, while the RuvA-RuvB complex plays an important role in the rescue of blocked DNA replication forks via replication fork reversal (RFR). RuvA specifically binds to HJ cruciform DNA, conferring on it an open structure. The RuvB hexamer acts as an ATP-dependent pump, pulling dsDNA into and through the RuvAB complex. RuvB forms 2 homohexamers on either side of HJ DNA bound by 1 or 2 RuvA tetramers; 4 subunits per hexamer contact DNA at a time. Coordinated motions by a converter formed by DNA-disengaged RuvB subunits stimulates ATP hydrolysis and nucleotide exchange. Immobilization of the converter enables RuvB to convert the ATP-contained energy into a lever motion, pulling 2 nucleotides of DNA out of the RuvA tetramer per ATP hydrolyzed, thus driving DNA branch migration. The RuvB motors rotate together with the DNA substrate, which together with the progressing nucleotide cycle form the mechanistic basis for DNA recombination by continuous HJ branch migration. Branch migration allows RuvC to scan DNA until it finds its consensus sequence, where it cleaves and resolves cruciform DNA. The chain is Holliday junction branch migration complex subunit RuvB from Shouchella clausii (strain KSM-K16) (Alkalihalobacillus clausii).